The following is a 393-amino-acid chain: Formate-dependent phosphoribosylglycinamide formyltransferase (393 aa).

Residues Glu22–Leu23 and Glu82 contribute to the N(1)-(5-phospho-beta-D-ribosyl)glycinamide site. Residues Arg114, Lys155, Ser160–Gln165, Glu195–Ile198, and Glu203 each bind ATP. Residues Arg119–Leu308 form the ATP-grasp domain. Mg(2+)-binding residues include Glu267 and Glu279. N(1)-(5-phospho-beta-D-ribosyl)glycinamide-binding positions include Asp286, Lys356, and Arg363 to Arg364.

It belongs to the PurK/PurT family. As to quaternary structure, homodimer.

It carries out the reaction N(1)-(5-phospho-beta-D-ribosyl)glycinamide + formate + ATP = N(2)-formyl-N(1)-(5-phospho-beta-D-ribosyl)glycinamide + ADP + phosphate + H(+). It participates in purine metabolism; IMP biosynthesis via de novo pathway; N(2)-formyl-N(1)-(5-phospho-D-ribosyl)glycinamide from N(1)-(5-phospho-D-ribosyl)glycinamide (formate route): step 1/1. Functionally, involved in the de novo purine biosynthesis. Catalyzes the transfer of formate to 5-phospho-ribosyl-glycinamide (GAR), producing 5-phospho-ribosyl-N-formylglycinamide (FGAR). Formate is provided by PurU via hydrolysis of 10-formyl-tetrahydrofolate. This is Formate-dependent phosphoribosylglycinamide formyltransferase from Azoarcus sp. (strain BH72).